The following is an 82-amino-acid chain: Phosphoribosylformylglycinamidine synthase subunit PurS (82 aa).

This sequence belongs to the PurS family. In terms of assembly, homodimer. Part of the FGAM synthase complex composed of 1 PurL, 1 PurQ and 2 PurS subunits.

It is found in the cytoplasm. The enzyme catalyses N(2)-formyl-N(1)-(5-phospho-beta-D-ribosyl)glycinamide + L-glutamine + ATP + H2O = 2-formamido-N(1)-(5-O-phospho-beta-D-ribosyl)acetamidine + L-glutamate + ADP + phosphate + H(+). It participates in purine metabolism; IMP biosynthesis via de novo pathway; 5-amino-1-(5-phospho-D-ribosyl)imidazole from N(2)-formyl-N(1)-(5-phospho-D-ribosyl)glycinamide: step 1/2. Functionally, part of the phosphoribosylformylglycinamidine synthase complex involved in the purines biosynthetic pathway. Catalyzes the ATP-dependent conversion of formylglycinamide ribonucleotide (FGAR) and glutamine to yield formylglycinamidine ribonucleotide (FGAM) and glutamate. The FGAM synthase complex is composed of three subunits. PurQ produces an ammonia molecule by converting glutamine to glutamate. PurL transfers the ammonia molecule to FGAR to form FGAM in an ATP-dependent manner. PurS interacts with PurQ and PurL and is thought to assist in the transfer of the ammonia molecule from PurQ to PurL. In Thermotoga maritima (strain ATCC 43589 / DSM 3109 / JCM 10099 / NBRC 100826 / MSB8), this protein is Phosphoribosylformylglycinamidine synthase subunit PurS.